The primary structure comprises 569 residues: Neutral leucine aminopeptidase, chloroplastic (569 aa).

A chloroplast-targeting transit peptide spans 1–48; the sequence is MNGVLCSSSSSFHSYPSIFTKFQSSPIWSFSISVTPLCSRRAKRMAHS. Positions 339 and 344 each coordinate Mn(2+). Residue Lys-351 is part of the active site. 3 residues coordinate Mn(2+): Asp-364, Asp-424, and Glu-426. Arg-428 is an active-site residue.

It belongs to the peptidase M17 family. As to quaternary structure, homohexamer (dimer of homotrimers). The cofactor is Mn(2+). Expressed constitutively at low levels. Expressed in vegetative and reproductive organs, including leaves, stems, roots, cotyledons (after imbibition), pistils, sepals, petals, stamens, and floral buds (at protein level). Present at very low levels in healthy leaves.

It is found in the plastid. Its subcellular location is the chloroplast. It carries out the reaction Release of an N-terminal amino acid, Xaa-|-Yaa-, in which Xaa is preferably Leu, but may be other amino acids including Pro although not Arg or Lys, and Yaa may be Pro. Amino acid amides and methyl esters are also readily hydrolyzed, but rates on arylamides are exceedingly low.. The enzyme catalyses Release of N-terminal proline from a peptide.. Functionally, catalyzes the removal of unsubstituted N-terminal amino acids from various peptides. When associated as homohexamer, catalyzes the proteolyzes of Xaa-Leu dipeptides. Possesses leucine aminopeptidase activity against the model substrate leucine-amido methyl coumarin. Presumably involved in the processing and regular turnover of intracellular proteins. Its function is as follows. Functions as a molecular chaperone to protect proteins from heat-induced damage. The protein is Neutral leucine aminopeptidase, chloroplastic of Solanum lycopersicum (Tomato).